A 440-amino-acid polypeptide reads, in one-letter code: Chromosome partition protein MukF (440 aa).

The interval 208-236 is leucine-zipper; the sequence is LSETSGTLRELQDTLEAAGDKLQANLLRI.

The protein belongs to the MukF family. As to quaternary structure, interacts, and probably forms a ternary complex, with MukE and MukB via its C-terminal region. The complex formation is stimulated by calcium or magnesium. It is required for an interaction between MukE and MukB.

Its subcellular location is the cytoplasm. It is found in the nucleoid. Involved in chromosome condensation, segregation and cell cycle progression. May participate in facilitating chromosome segregation by condensation DNA from both sides of a centrally located replisome during cell division. Not required for mini-F plasmid partitioning. Probably acts via its interaction with MukB and MukE. Overexpression results in anucleate cells. It has a calcium binding activity. This Shigella boydii serotype 18 (strain CDC 3083-94 / BS512) protein is Chromosome partition protein MukF.